Reading from the N-terminus, the 228-residue chain is Large ribosomal subunit protein uL3 (228 aa).

Residues 157–176 are disordered; it reads CHRHAGGTGMSASPSRTFKG.

It belongs to the universal ribosomal protein uL3 family. As to quaternary structure, part of the 50S ribosomal subunit. Forms a cluster with proteins L14 and L19.

One of the primary rRNA binding proteins, it binds directly near the 3'-end of the 23S rRNA, where it nucleates assembly of the 50S subunit. The protein is Large ribosomal subunit protein uL3 of Rhodopirellula baltica (strain DSM 10527 / NCIMB 13988 / SH1).